The primary structure comprises 541 residues: Membrane protein insertase YidC (541 aa).

6 helical membrane-spanning segments follow: residues 6–26 (NILL…WQAD), 325–345 (LVVD…LLMF), 349–369 (FVGN…GLLF), 420–440 (GGCL…WVLL), 457–477 (LSVQ…MFIM), and 500–520 (VIFT…WLVG).

It belongs to the OXA1/ALB3/YidC family. Type 1 subfamily. In terms of assembly, interacts with the Sec translocase complex via SecD. Specifically interacts with transmembrane segments of nascent integral membrane proteins during membrane integration.

It is found in the cell inner membrane. Its function is as follows. Required for the insertion and/or proper folding and/or complex formation of integral membrane proteins into the membrane. Involved in integration of membrane proteins that insert both dependently and independently of the Sec translocase complex, as well as at least some lipoproteins. Aids folding of multispanning membrane proteins. In Shewanella sp. (strain W3-18-1), this protein is Membrane protein insertase YidC.